Consider the following 411-residue polypeptide: Actin-like protein 9 (411 aa).

Basic and acidic residues predominate over residues 1–15 (MDVNGPKRWEPHRSL). The interval 1-23 (MDVNGPKRWEPHRSLDLNPRSTP) is disordered.

Belongs to the actin family. In terms of assembly, interacts with ACTL7A.

It localises to the cytoplasmic vesicle. The protein resides in the secretory vesicle. It is found in the acrosome. The protein localises to the cytoplasm. Its subcellular location is the cytoskeleton. It localises to the perinuclear theca. In terms of biological role, testis-specic protein that plays an important role in fusion of proacrosomal vesicles and perinuclear theca formation. The chain is Actin-like protein 9 (Actl9) from Rattus norvegicus (Rat).